The following is a 411-amino-acid chain: LL-diaminopimelate aminotransferase (411 aa).

Substrate contacts are provided by Tyr15 and Gly42. Residues Tyr72, 108-109, Tyr132, Asn187, Tyr218, and 246-248 contribute to the pyridoxal 5'-phosphate site; these read AK and SFS. Residues Lys109, Tyr132, and Asn187 each coordinate substrate. Lys249 is subject to N6-(pyridoxal phosphate)lysine. Residues Arg257 and Asn292 each coordinate pyridoxal 5'-phosphate. Substrate contacts are provided by Asn292 and Arg388.

This sequence belongs to the class-I pyridoxal-phosphate-dependent aminotransferase family. LL-diaminopimelate aminotransferase subfamily. In terms of assembly, homodimer. It depends on pyridoxal 5'-phosphate as a cofactor.

The catalysed reaction is (2S,6S)-2,6-diaminopimelate + 2-oxoglutarate = (S)-2,3,4,5-tetrahydrodipicolinate + L-glutamate + H2O + H(+). Its pathway is amino-acid biosynthesis; L-lysine biosynthesis via DAP pathway; LL-2,6-diaminopimelate from (S)-tetrahydrodipicolinate (aminotransferase route): step 1/1. Its function is as follows. Involved in the synthesis of meso-diaminopimelate (m-DAP or DL-DAP), required for both lysine and peptidoglycan biosynthesis. Catalyzes the direct conversion of tetrahydrodipicolinate to LL-diaminopimelate. This is LL-diaminopimelate aminotransferase from Crocosphaera subtropica (strain ATCC 51142 / BH68) (Cyanothece sp. (strain ATCC 51142)).